The following is a 474-amino-acid chain: UDP-glycosyltransferase 71C2 (474 aa).

UDP-alpha-D-glucose-binding positions include serine 293, 352-354, 369-377, and 391-394; these read APQ, HCGWNSILE, and YAEQ.

It belongs to the UDP-glycosyltransferase family.

Functionally, possesses low quercetin 3-O-glucosyltransferase, 7-O-glucosyltransferase and 3'-O-glucosyltransferase activities in vitro. Glucosylates other secondary metabolites in vitro like vanillin, trans-resveratrol, curumin and etoposide. The protein is UDP-glycosyltransferase 71C2 (UGT71C2) of Arabidopsis thaliana (Mouse-ear cress).